The following is a 132-amino-acid chain: MSMTDPIADMLTRIRNAGMAKHQKVDIPSSNLKVSLANLLRNEGFIKNYKVIADNKQGVLRVYLKYIDEKDHVINEIKRVSKPGGRVYVDSDGIPKVKNGLGVAVLSTSKGIITDKSAREFGIGGELICTVW.

The protein belongs to the universal ribosomal protein uS8 family. As to quaternary structure, part of the 30S ribosomal subunit. Contacts proteins S5 and S12.

In terms of biological role, one of the primary rRNA binding proteins, it binds directly to 16S rRNA central domain where it helps coordinate assembly of the platform of the 30S subunit. This is Small ribosomal subunit protein uS8 from Geotalea daltonii (strain DSM 22248 / JCM 15807 / FRC-32) (Geobacter daltonii).